The sequence spans 338 residues: Lipoate-protein ligase A (338 aa).

Residues 29–216 (PATQRVLFLW…AFFAHYGERV (188 aa)) enclose the BPL/LPL catalytic domain. Residues Arg-71, 76–79 (GAVF), and Lys-134 contribute to the ATP site. Lys-134 is a (R)-lipoate binding site.

The protein belongs to the LplA family. In terms of assembly, monomer.

It is found in the cytoplasm. It catalyses the reaction L-lysyl-[lipoyl-carrier protein] + (R)-lipoate + ATP = N(6)-[(R)-lipoyl]-L-lysyl-[lipoyl-carrier protein] + AMP + diphosphate + H(+). Its pathway is protein modification; protein lipoylation via exogenous pathway; protein N(6)-(lipoyl)lysine from lipoate: step 1/2. The protein operates within protein modification; protein lipoylation via exogenous pathway; protein N(6)-(lipoyl)lysine from lipoate: step 2/2. In terms of biological role, catalyzes both the ATP-dependent activation of exogenously supplied lipoate to lipoyl-AMP and the transfer of the activated lipoyl onto the lipoyl domains of lipoate-dependent enzymes. In Salmonella agona (strain SL483), this protein is Lipoate-protein ligase A.